Reading from the N-terminus, the 437-residue chain is Chromosomal replication initiator protein DnaA (437 aa).

The interval 1 to 72 (MEQFNAFKSL…ESLYEGIKSV (72 aa)) is domain I, interacts with DnaA modulators. The tract at residues 72 to 99 (VNFVNEQDFFFNLAKLEENSRDTLYQNS) is domain II. A domain III, AAA+ region region spans residues 100–320 (GLSKNYTFQN…GIATKLLFFA (221 aa)). Residues Gly-144, Gly-146, Lys-147, and Thr-148 each coordinate ATP. The segment at 321–437 (KTSKQNLINT…LRDVITSLVI (117 aa)) is domain IV, binds dsDNA.

This sequence belongs to the DnaA family. As to quaternary structure, oligomerizes as a right-handed, spiral filament on DNA at oriC.

The protein localises to the cytoplasm. Plays an essential role in the initiation and regulation of chromosomal replication. ATP-DnaA binds to the origin of replication (oriC) to initiate formation of the DNA replication initiation complex once per cell cycle. Binds the DnaA box (a 9 base pair repeat at the origin) and separates the double-stranded (ds)DNA. Forms a right-handed helical filament on oriC DNA; dsDNA binds to the exterior of the filament while single-stranded (ss)DNA is stabiized in the filament's interior. The ATP-DnaA-oriC complex binds and stabilizes one strand of the AT-rich DNA unwinding element (DUE), permitting loading of DNA polymerase. After initiation quickly degrades to an ADP-DnaA complex that is not apt for DNA replication. Binds acidic phospholipids. The protein is Chromosomal replication initiator protein DnaA of Mycoplasma genitalium (strain ATCC 33530 / DSM 19775 / NCTC 10195 / G37) (Mycoplasmoides genitalium).